A 49-amino-acid chain; its full sequence is Large ribosomal subunit protein bL33A (49 aa).

Belongs to the bacterial ribosomal protein bL33 family.

This chain is Large ribosomal subunit protein bL33A, found in Geobacillus thermodenitrificans (strain NG80-2).